Consider the following 874-residue polypeptide: Tyrosine-protein kinase receptor TYRO3 (874 aa).

A signal peptide spans 1–20 (MEVSLCILLFLLHFNEGIHG). 2 consecutive Ig-like C2-type domains span residues 21-106 (VRFT…IISS) and 117-198 (PHFG…GTVH). Topologically, residues 21–411 (VRFTQKPFHQ…QAQTQRGHMW (391 aa)) are extracellular. Cys-42 and Cys-95 are disulfide-bonded. 6 N-linked (GlcNAc...) asparagine glycosylation sites follow: Asn-135, Asn-174, Asn-217, Asn-270, Asn-305, and Asn-373. A disulfide bridge connects residues Cys-138 and Cys-181. Fibronectin type-III domains lie at 202-297 (RPDS…TPQA) and 299-403 (PSAA…AMQA). The helical transmembrane segment at 412–432 (VGLLFGLLVATMVGLLLIVLI) threads the bilayer. At 433 to 874 (RNRGKETQFG…EEEEDVIINV (442 aa)) the chain is on the cytoplasmic side. Residues 497 to 768 (LTLGRMLGKG…QHLIDQLELL (272 aa)) enclose the Protein kinase domain. ATP is bound by residues 503–511 (LGKGEFGSV) and Lys-529. Asp-634 serves as the catalytic Proton acceptor. Residue Tyr-665 is modified to Phosphotyrosine; by autocatalysis.

The protein belongs to the protein kinase superfamily. Tyr protein kinase family. AXL/UFO subfamily.

The protein resides in the cell membrane. The enzyme catalyses L-tyrosyl-[protein] + ATP = O-phospho-L-tyrosyl-[protein] + ADP + H(+). May be involved in cell adhesion processes, particularly in the central nervous system. In Danio rerio (Zebrafish), this protein is Tyrosine-protein kinase receptor TYRO3 (tyro3).